The following is a 505-amino-acid chain: Cytochrome P450 monooxygenase iliC (505 aa).

A helical membrane pass occupies residues 6–26 (LIAQHSLTLTIASSVLLVFLL). Residue cysteine 453 coordinates heme.

The protein belongs to the cytochrome P450 family. Heme is required as a cofactor.

It is found in the membrane. It catalyses the reaction (3E,5S)-3-[(2E,4E,8S,10E,12Z)-1-hydroxy-4,8-dimethyltetradeca-2,4,10,12-tetraen-1-ylidene]-5-[(4-hydroxyphenyl)methyl]pyrrolidine-2,4-dione + reduced [NADPH--hemoprotein reductase] + O2 = 3-[(2E,4E,8S,10E,12Z)-4,8-dimethyltetradeca-2,4,10,12-tetraenoyl]-4-hydroxy-5-(4-hydroxyphenyl)-1,2-dihydropyridin-2-one + oxidized [NADPH--hemoprotein reductase] + 2 H2O. Its pathway is mycotoxin biosynthesis. In terms of biological role, cytochrome P450 monooxygenase; part of the gene cluster that mediates the biosynthesis of ilicicolin H, a 4-hydroxy-2-pyridonealkaloid that has potent and broad antifungal activities by inhibiting the mitochondrial respiration chain. IliC catalyzes the ring expansion of the tetramate intermediate to the acyclic 2-pyridone intermediate that contains the trans bis-diene chain. The biosynthesis of ilicicolin H starts with formation of the tetramic acid by the hybrid PKS-NRPS synthetase iliA with the partnering trans-enoyl reductase iliB since iliA lacks a designated enoylreductase (ER) domain. The cytochrome P450 monooxygenase iliC then catalyzes the ring expansion of the tetramate to the acyclic 2-pyridone. The pericyclase iliD further converts the acyclic 2-pyridone into 8-epi-ilicicolin H. 8-epi-ilicicolin H might then spontaneously convert to ilicicolin H since ilicicolin H is produced in the absence of the epimerase iliE, in contrast to what was observed for the Talaromyces variabilis ilicolin H biosynthetic pathway. This Neonectria sp. (strain DH2) protein is Cytochrome P450 monooxygenase iliC.